The primary structure comprises 209 residues: GTP cyclohydrolase-2 (209 aa).

49–53 (RIHSE) lines the GTP pocket. Positions 54, 65, and 67 each coordinate Zn(2+). GTP contacts are provided by residues Q70, 92–94 (EGR), and T114. D126 serves as the catalytic Proton acceptor. The Nucleophile role is filled by R128. Residues T149 and K154 each contribute to the GTP site.

This sequence belongs to the GTP cyclohydrolase II family. It depends on Zn(2+) as a cofactor.

It catalyses the reaction GTP + 4 H2O = 2,5-diamino-6-hydroxy-4-(5-phosphoribosylamino)-pyrimidine + formate + 2 phosphate + 3 H(+). It participates in cofactor biosynthesis; riboflavin biosynthesis; 5-amino-6-(D-ribitylamino)uracil from GTP: step 1/4. Functionally, catalyzes the conversion of GTP to 2,5-diamino-6-ribosylamino-4(3H)-pyrimidinone 5'-phosphate (DARP), formate and pyrophosphate. The polypeptide is GTP cyclohydrolase-2 (Shewanella pealeana (strain ATCC 700345 / ANG-SQ1)).